The chain runs to 173 residues: Large ribosomal subunit protein uL10 (173 aa).

Belongs to the universal ribosomal protein uL10 family. Part of the ribosomal stalk of the 50S ribosomal subunit. The N-terminus interacts with L11 and the large rRNA to form the base of the stalk. The C-terminus forms an elongated spine to which L12 dimers bind in a sequential fashion forming a multimeric L10(L12)X complex.

In terms of biological role, forms part of the ribosomal stalk, playing a central role in the interaction of the ribosome with GTP-bound translation factors. The polypeptide is Large ribosomal subunit protein uL10 (Cupriavidus pinatubonensis (strain JMP 134 / LMG 1197) (Cupriavidus necator (strain JMP 134))).